The chain runs to 462 residues: Fumarate hydratase class II (462 aa).

Substrate contacts are provided by residues 97–99 (SGT), 127–130 (HPND), 137–139 (SSN), and Thr-185. His-186 functions as the Proton donor/acceptor in the catalytic mechanism. Ser-316 is a catalytic residue. Residues Ser-317 and 322–324 (KVN) contribute to the substrate site.

It belongs to the class-II fumarase/aspartase family. Fumarase subfamily. In terms of assembly, homotetramer.

It is found in the cytoplasm. The catalysed reaction is (S)-malate = fumarate + H2O. Its pathway is carbohydrate metabolism; tricarboxylic acid cycle; (S)-malate from fumarate: step 1/1. Functionally, involved in the TCA cycle. Catalyzes the stereospecific interconversion of fumarate to L-malate. The sequence is that of Fumarate hydratase class II from Bacillus subtilis (strain 168).